The sequence spans 286 residues: Aquaporin PIP1-1 (286 aa).

Positions Met1–Pro34 are disordered. Residues Met1–Gly54 lie on the Cytoplasmic side of the membrane. Residues Ile55–Val75 form a helical membrane-spanning segment. At Val76–Gln88 the chain is on the extracellular side. Residues Gly89 to Ser109 form a helical membrane-spanning segment. Residues Gly110–Arg131 are Cytoplasmic-facing. Residues Asn114–Ala116 carry the NPA 1 motif. A helical transmembrane segment spans residues Ala132 to Gly152. Over Tyr153–Lys174 the chain is Extracellular. The helical transmembrane segment at Gly175–Ala195 threads the bilayer. Residues Thr196–Pro208 are Cytoplasmic-facing. The helical transmembrane segment at Ile209–Ile229 threads the bilayer. Topologically, residues Thr230–Trp256 are extracellular. The short motif at Asn235–Ala237 is the NPA 2 element. A helical transmembrane segment spans residues Ile257–Ile277. Topologically, residues Arg278–Pro286 are cytoplasmic.

It belongs to the MIP/aquaporin (TC 1.A.8) family. PIP (TC 1.A.8.11) subfamily. In terms of tissue distribution, expressed in leaves, roots, stems, flowers and fruits, with highest levels in roots.

Its subcellular location is the cell membrane. Water channel required to facilitate the transport of water across cell membrane; mercury-insensitive. Promotes primary root elongation and root hair formation. Contributes to the tolerance to multiple abiotic stresses including salt (NaCl), cold and water deprivation, by modulating cytosolic K(+)/Na(+) ratio, maintaining osmotic balance, and reducing membrane injury (e.g. oxidative injury). Also regulates the expression of abscisic acid (ABA)-responsive genes during dehydration and salt stresses. The polypeptide is Aquaporin PIP1-1 (Musa acuminata (Banana)).